Here is a 60-residue protein sequence, read N- to C-terminus: Myrmicitoxin(1)-Pr4b (60 aa).

The N-terminal stretch at 1–23 (MKAIIFLFAVLTVVAIIIPIISG) is a signal peptide. The propeptide occupies 24-33 (EPNAGPHAAS). Residue glutamine 59 is modified to Glutamine amide.

It belongs to the formicidae venom clade 2 family. As to expression, expressed by the venom gland.

The protein localises to the secreted. In terms of biological role, toxin that causes a rapid and irreversible paralysis when intrathoracically injected into insects (blowflies). Does not cause spontaneous nocifensive behaviors by intraplantar injection in mice. This is Myrmicitoxin(1)-Pr4b from Pogonomyrmex rugosus (Desert harvester ant).